The chain runs to 94 residues: ATP synthase F(0) complex subunit f, mitochondrial (94 aa).

The residue at position 2 (Ala-2) is an N-acetylalanine. Ser-3 is subject to Phosphoserine. Lys-22 is subject to N6-acetyllysine. A helical transmembrane segment spans residues 68–85 (MVLACYVLFSYSFSYKHL).

Belongs to the ATPase F chain family. Component of the ATP synthase complex composed at least of ATP5F1A/subunit alpha, ATP5F1B/subunit beta, ATP5MC1/subunit c (homooctomer), MT-ATP6/subunit a, MT-ATP8/subunit 8, ATP5ME/subunit e, ATP5MF/subunit f, ATP5MG/subunit g, ATP5MK/subunit k, ATP5MJ/subunit j, ATP5F1C/subunit gamma, ATP5F1D/subunit delta, ATP5F1E/subunit epsilon, ATP5PF/subunit F6, ATP5PB/subunit b, ATP5PD/subunit d, ATP5PO/subunit OSCP. ATP synthase complex consists of a soluble F(1) head domain (subunits alpha(3) and beta(3)) - the catalytic core - and a membrane F(0) domain - the membrane proton channel (subunits c, a, 8, e, f, g, k and j). These two domains are linked by a central stalk (subunits gamma, delta, and epsilon) rotating inside the F1 region and a stationary peripheral stalk (subunits F6, b, d, and OSCP).

The protein localises to the mitochondrion. Its subcellular location is the mitochondrion inner membrane. In terms of biological role, subunit f, of the mitochondrial membrane ATP synthase complex (F(1)F(0) ATP synthase or Complex V) that produces ATP from ADP in the presence of a proton gradient across the membrane which is generated by electron transport complexes of the respiratory chain. ATP synthase complex consist of a soluble F(1) head domain - the catalytic core - and a membrane F(1) domain - the membrane proton channel. These two domains are linked by a central stalk rotating inside the F(1) region and a stationary peripheral stalk. During catalysis, ATP synthesis in the catalytic domain of F(1) is coupled via a rotary mechanism of the central stalk subunits to proton translocation. In vivo, can only synthesize ATP although its ATP hydrolase activity can be activated artificially in vitro. Part of the complex F(0) domain. The polypeptide is ATP synthase F(0) complex subunit f, mitochondrial (Pongo abelii (Sumatran orangutan)).